The sequence spans 125 residues: Large ribosomal subunit protein bL19 (125 aa).

This sequence belongs to the bacterial ribosomal protein bL19 family.

Functionally, this protein is located at the 30S-50S ribosomal subunit interface and may play a role in the structure and function of the aminoacyl-tRNA binding site. The polypeptide is Large ribosomal subunit protein bL19 (Ehrlichia ruminantium (strain Gardel)).